We begin with the raw amino-acid sequence, 128 residues long: S-adenosylmethionine decarboxylase proenzyme (128 aa).

Ser-61 (schiff-base intermediate with substrate; via pyruvic acid) is an active-site residue. Residue Ser-61 is modified to Pyruvic acid (Ser); by autocatalysis. His-66 functions as the Proton acceptor; for processing activity in the catalytic mechanism. Cys-81 (proton donor; for catalytic activity) is an active-site residue.

This sequence belongs to the prokaryotic AdoMetDC family. Type 1 subfamily. In terms of assembly, heterotetramer of two alpha and two beta chains arranged as a dimer of alpha/beta heterodimers. It depends on pyruvate as a cofactor. In terms of processing, is synthesized initially as an inactive proenzyme. Formation of the active enzyme involves a self-maturation process in which the active site pyruvoyl group is generated from an internal serine residue via an autocatalytic post-translational modification. Two non-identical subunits are generated from the proenzyme in this reaction, and the pyruvate is formed at the N-terminus of the alpha chain, which is derived from the carboxyl end of the proenzyme. The post-translation cleavage follows an unusual pathway, termed non-hydrolytic serinolysis, in which the side chain hydroxyl group of the serine supplies its oxygen atom to form the C-terminus of the beta chain, while the remainder of the serine residue undergoes an oxidative deamination to produce ammonia and the pyruvoyl group blocking the N-terminus of the alpha chain.

It catalyses the reaction S-adenosyl-L-methionine + H(+) = S-adenosyl 3-(methylsulfanyl)propylamine + CO2. Its pathway is amine and polyamine biosynthesis; S-adenosylmethioninamine biosynthesis; S-adenosylmethioninamine from S-adenosyl-L-methionine: step 1/1. Functionally, catalyzes the decarboxylation of S-adenosylmethionine to S-adenosylmethioninamine (dcAdoMet), the propylamine donor required for the synthesis of the polyamines spermine and spermidine from the diamine putrescine. This Synechococcus sp. (strain WH7803) protein is S-adenosylmethionine decarboxylase proenzyme.